The chain runs to 376 residues: MAIKVLVVDDSSFFRRRVSEIINAESRLEVIDVAVNGKEAVEKAKRLKPDVITMDIEMPVMDGISAVREIMASVPTPILMFSSLTHDGAKATLDALDAGALDFLPKKFEDIARNRDEAVSLLQQRVIQIASKRAFMRRPVASSTPVQERPQSTLNRPTTGLRREASAQAPVSRAPVAAKFRASGKKYQLTAIGTSTGGPVALQKILTKLPANYPHPIVLIQHMPATFTAAFASRLNSLCKIQVKEAEDGDVLQAGVAYLAPGGKQMMIDGRPGAARLRIIDGGERMNYKPCVDVTFGSAAKIYADKVLSMVLTGMGADGREGARMLKSAGATIWAQDEDSCVVYGMPQAVAKAGLSTEDLPLERIAERMLVEVGLA.

The region spanning 4–121 is the Response regulatory domain; that stretch reads KVLVVDDSSF…ARNRDEAVSL (118 aa). Asp-55 carries the 4-aspartylphosphate modification. Residues 138–169 are disordered; the sequence is RPVASSTPVQERPQSTLNRPTTGLRREASAQA. Residues 141–158 show a composition bias toward polar residues; it reads ASSTPVQERPQSTLNRPT. Positions 183-376 constitute a CheB-type methylesterase domain; that stretch reads SGKKYQLTAI…ERMLVEVGLA (194 aa). Active-site residues include Ser-195, His-222, and Asp-318.

This sequence belongs to the CheB family. Phosphorylated by CheA. Phosphorylation of the N-terminal regulatory domain activates the methylesterase activity.

Its subcellular location is the cytoplasm. The enzyme catalyses [protein]-L-glutamate 5-O-methyl ester + H2O = L-glutamyl-[protein] + methanol + H(+). It carries out the reaction L-glutaminyl-[protein] + H2O = L-glutamyl-[protein] + NH4(+). Its function is as follows. Involved in chemotaxis. Part of a chemotaxis signal transduction system that modulates chemotaxis in response to various stimuli. Catalyzes the demethylation of specific methylglutamate residues introduced into the chemoreceptors (methyl-accepting chemotaxis proteins or MCP) by CheR. Also mediates the irreversible deamidation of specific glutamine residues to glutamic acid. The sequence is that of Protein-glutamate methylesterase/protein-glutamine glutaminase 1 from Vibrio vulnificus (strain YJ016).